Here is a 471-residue protein sequence, read N- to C-terminus: tRNA-2-methylthio-N(6)-dimethylallyladenosine synthase (471 aa).

The region spanning Leu-31 to Asn-149 is the MTTase N-terminal domain. [4Fe-4S] cluster is bound by residues Cys-40, Cys-76, Cys-110, Cys-186, Cys-190, and Cys-193. Residues Arg-172–Glu-402 form the Radical SAM core domain. In terms of domain architecture, TRAM spans Ala-405 to Glu-468.

The protein belongs to the methylthiotransferase family. MiaB subfamily. In terms of assembly, monomer. Requires [4Fe-4S] cluster as cofactor.

The protein resides in the cytoplasm. The enzyme catalyses N(6)-dimethylallyladenosine(37) in tRNA + (sulfur carrier)-SH + AH2 + 2 S-adenosyl-L-methionine = 2-methylsulfanyl-N(6)-dimethylallyladenosine(37) in tRNA + (sulfur carrier)-H + 5'-deoxyadenosine + L-methionine + A + S-adenosyl-L-homocysteine + 2 H(+). Functionally, catalyzes the methylthiolation of N6-(dimethylallyl)adenosine (i(6)A), leading to the formation of 2-methylthio-N6-(dimethylallyl)adenosine (ms(2)i(6)A) at position 37 in tRNAs that read codons beginning with uridine. The chain is tRNA-2-methylthio-N(6)-dimethylallyladenosine synthase from Thermoanaerobacter sp. (strain X514).